The sequence spans 322 residues: Cytochrome c biogenesis protein CcsA (322 aa).

8 helical membrane passes run 9–29, 44–64, 71–91, 98–118, 143–163, 226–246, 253–273, and 287–307; these read ILTH…LITL, GMIA…IYSG, LYES…VPYF, LTTI…SGLL, MILS…LLVI, VISL…VWAN, WSWD…AIYL, and AIVA…VNLL.

Belongs to the CcmF/CycK/Ccl1/NrfE/CcsA family. As to quaternary structure, may interact with Ccs1.

The protein resides in the plastid. Its subcellular location is the chloroplast thylakoid membrane. Functionally, required during biogenesis of c-type cytochromes (cytochrome c6 and cytochrome f) at the step of heme attachment. The polypeptide is Cytochrome c biogenesis protein CcsA (Guizotia abyssinica (Niger)).